Consider the following 444-residue polypeptide: C4-dicarboxylate transport protein (444 aa).

Helical transmembrane passes span 18 to 40 (FYSHLYVQVLVAIAAGILLGHFY), 53 to 75 (AFIKLVKMIIAPVIFLTVATGIA), 90 to 112 (AMLYFLTFSTLALIIGLIVANVV), 142 to 159 (IVGFLTNIIPTTIVGAFA), 163 to 180 (ILQVLFFSVLFGIALAMV), 201 to 222 (LVAILMKAAPIGAFGAMAFTIG), 232 to 254 (LAMLIGTFYITSLLFVFIVLGAV), 327 to 349 (LFIAQATGIHLSWGDQILLLLVA), and 364 to 386 (FITLAATLSVVPSVPVAGMALIL).

This sequence belongs to the dicarboxylate/amino acid:cation symporter (DAACS) (TC 2.A.23) family.

Its subcellular location is the cell inner membrane. Functionally, responsible for the transport of dicarboxylates such as succinate, fumarate, and malate from the periplasm across the inner membrane. This transport system plays an important role in the energy supply of rhizobium-legume symbionts. This is C4-dicarboxylate transport protein (dctA) from Rhizobium leguminosarum.